Here is a 574-residue protein sequence, read N- to C-terminus: Serine/threonine-protein kinase fray1 (574 aa).

Positions 24 to 41 (NHHDLPDSDSDSSSREEE) are enriched in basic and acidic residues. Residues 24–64 (NHHDLPDSDSDSSSREEELMNSSGGGNGKEPIGEKKKLPSH) form a disordered region. The Protein kinase domain occupies 97–357 (YNLIEPIGEG…ASKLLEHKVF (261 aa)). ATP is bound by residues 103-111 (IGEGTEGRV) and K126. D221 (proton acceptor) is an active-site residue. Phosphothreonine; by autocatalysis is present on T256. Disordered regions lie at residues 381 to 447 (YRES…LVNM), 462 to 514 (LSSG…PEKE), and 532 to 554 (FGSP…HEHH). Low complexity-rich tracts occupy residues 386 to 403 (SPAS…PSSP), 418 to 441 (KNIK…NLSN), and 462 to 475 (LSSG…SSDL). Over residues 478 to 491 (GHLHKIGTPKKKHS) the composition is skewed to basic residues. Residues 492–506 (PSGSIGDSHGSISPP) show a composition bias toward low complexity. The span at 536–553 (KEGDHNHQHHKSEGDHEH) shows a compositional bias: basic and acidic residues.

The protein belongs to the protein kinase superfamily. STE Ser/Thr protein kinase family. STE20 subfamily. Requires Mn(2+) as cofactor. Post-translationally, undergoes autophosphorylation in the catalytic domain.

It carries out the reaction L-seryl-[protein] + ATP = O-phospho-L-seryl-[protein] + ADP + H(+). The enzyme catalyses L-threonyl-[protein] + ATP = O-phospho-L-threonyl-[protein] + ADP + H(+). This is Serine/threonine-protein kinase fray1 from Dictyostelium discoideum (Social amoeba).